Here is an 847-residue protein sequence, read N- to C-terminus: Follistatin-related protein 5 (847 aa).

An N-terminal signal peptide occupies residues 1–20 (MFRCWSAILILGFIFLASEG). Residues 81–135 (ETRHAECACMDLCKQHYKPVCGSDGEFYENHCEVHRAACLKKQKITIVHNEDCFF) enclose the Kazal-like domain. Disulfide bonds link cysteine 87-cysteine 119, cysteine 93-cysteine 112, and cysteine 101-cysteine 133. EF-hand domains are found at residues 175–210 (RKKP…EELN) and 211–246 (KDLS…QVIQ). The Ca(2+) site is built by aspartate 188, aspartate 190, asparagine 192, glutamate 199, aspartate 226, asparagine 228, aspartate 230, histidine 232, and glutamate 237. 2 consecutive Ig-like domains span residues 250–338 (PEDQ…FQVN) and 341–426 (PVIR…EDIS). 2 cysteine pairs are disulfide-bonded: cysteine 270/cysteine 321 and cysteine 362/cysteine 413. 2 N-linked (GlcNAc...) asparagine glycosylation sites follow: asparagine 318 and asparagine 394.

Its subcellular location is the secreted. The sequence is that of Follistatin-related protein 5 (Fstl5) from Mus musculus (Mouse).